The sequence spans 653 residues: Macrolide export ATP-binding/permease protein MacB (653 aa).

The region spanning 6 to 244 (LALSHICREF…AAASLPADKP (239 aa)) is the ABC transporter domain. ATP is bound at residue 42–49 (GSSGSGKS). Helical transmembrane passes span 277–297 (FLTM…VALG), 526–546 (LAFL…IGVM), 587–607 (LGGI…NLLL), and 617–637 (FSIG…GYFP).

The protein belongs to the ABC transporter superfamily. Macrolide exporter (TC 3.A.1.122) family. As to quaternary structure, homodimer.

The protein resides in the cell inner membrane. Non-canonical ABC transporter that contains transmembrane domains (TMD), which form a pore in the inner membrane, and an ATP-binding domain (NBD), which is responsible for energy generation. Confers resistance against macrolides. This Bradyrhizobium diazoefficiens (strain JCM 10833 / BCRC 13528 / IAM 13628 / NBRC 14792 / USDA 110) protein is Macrolide export ATP-binding/permease protein MacB.